The primary structure comprises 725 residues: Malate synthase G 2 (725 aa).

Acetyl-CoA contacts are provided by residues valine 118, 125-126 (RY), serine 276, and arginine 313. Arginine 340 (proton acceptor) is an active-site residue. Glyoxylate is bound by residues arginine 340, glutamate 429, and 454-457 (GFLD). Mg(2+)-binding residues include glutamate 429 and aspartate 457. Proline 538 is a binding site for acetyl-CoA. Residue cysteine 619 is modified to Cysteine sulfenic acid (-SOH). Aspartate 633 functions as the Proton donor in the catalytic mechanism.

Belongs to the malate synthase family. GlcB subfamily. In terms of assembly, monomer. Mg(2+) is required as a cofactor.

It is found in the cytoplasm. It catalyses the reaction glyoxylate + acetyl-CoA + H2O = (S)-malate + CoA + H(+). Its pathway is carbohydrate metabolism; glyoxylate cycle; (S)-malate from isocitrate: step 2/2. In terms of biological role, involved in the glycolate utilization. Catalyzes the condensation and subsequent hydrolysis of acetyl-coenzyme A (acetyl-CoA) and glyoxylate to form malate and CoA. The chain is Malate synthase G 2 from Pseudomonas syringae pv. tomato (strain ATCC BAA-871 / DC3000).